Here is a 219-residue protein sequence, read N- to C-terminus: uncharacterized protein (219 aa).

The segment covering 1–17 (MIINNQNSPQSINTPSS) has biased composition (low complexity). A disordered region spans residues 1 to 31 (MIINNQNSPQSINTPSSVSSRQHINKSKKKK). Helical transmembrane passes span 49-69 (SLATVFGVIGGLVLGIVLVCK) and 83-105 (LVYRIVGIFLSAGTGGNLSSYIG). The disordered stretch occupies residues 135-219 (NHRSPIPLTN…NSDLEIPIPI (85 aa)). Residues 144-212 (NLNNNNNNNN…SNNNNDNNSD (69 aa)) show a composition bias toward low complexity.

The protein resides in the membrane. This is an uncharacterized protein from Dictyostelium discoideum (Social amoeba).